A 201-amino-acid polypeptide reads, in one-letter code: Probable nicotinate-nucleotide adenylyltransferase (201 aa).

Belongs to the NadD family.

It catalyses the reaction nicotinate beta-D-ribonucleotide + ATP + H(+) = deamido-NAD(+) + diphosphate. It participates in cofactor biosynthesis; NAD(+) biosynthesis; deamido-NAD(+) from nicotinate D-ribonucleotide: step 1/1. In terms of biological role, catalyzes the reversible adenylation of nicotinate mononucleotide (NaMN) to nicotinic acid adenine dinucleotide (NaAD). The polypeptide is Probable nicotinate-nucleotide adenylyltransferase (Bacteroides fragilis (strain YCH46)).